Consider the following 546-residue polypeptide: NAD(P)H-quinone oxidoreductase chain 4 (546 aa).

14 helical membrane passes run 24 to 44, 56 to 76, 108 to 128, 132 to 152, 156 to 176, 188 to 208, 232 to 252, 263 to 283, 297 to 317, 326 to 346, 352 to 372, 396 to 416, 437 to 457, and 484 to 504; these read FPWL…IPFF, FALS…INGF, MPLI…AWPV, PKLF…VFAV, LLFF…LAIW, FIIY…AMGF, ILCY…VPLH, TAPV…YALL, FSPL…LTSF, IAYS…SFSS, AMLQ…LVGA, FALW…SGFV, VIMA…LLSM, and IYII…PRLV.

This sequence belongs to the complex I subunit 4 family.

It localises to the cellular thylakoid membrane. The enzyme catalyses a plastoquinone + NADH + (n+1) H(+)(in) = a plastoquinol + NAD(+) + n H(+)(out). The catalysed reaction is a plastoquinone + NADPH + (n+1) H(+)(in) = a plastoquinol + NADP(+) + n H(+)(out). In terms of biological role, NDH-1 shuttles electrons from NAD(P)H, via FMN and iron-sulfur (Fe-S) centers, to quinones in the respiratory chain. The immediate electron acceptor for the enzyme in this species is believed to be plastoquinone. Couples the redox reaction to proton translocation (for every two electrons transferred, four hydrogen ions are translocated across the cytoplasmic membrane), and thus conserves the redox energy in a proton gradient. In Prochlorococcus marinus subsp. pastoris (strain CCMP1986 / NIES-2087 / MED4), this protein is NAD(P)H-quinone oxidoreductase chain 4.